We begin with the raw amino-acid sequence, 102 residues long: Omega-hexatoxin-Hi2b (102 aa).

Residues 1–23 (MKFSKLSLTLALILTQAIFVLCG) form the signal peptide. The propeptide occupies 24 to 56 (KINEDFMENGLESHALHDEIRKPIDTEKADAER). Disulfide bonds link C61-C75, C68-C81, and C74-C86. At L98 the chain carries Leucine amide. Positions 100-102 (RAL) are excised as a propeptide.

The protein belongs to the neurotoxin 15 family. 02 (omega-actx) subfamily. In terms of tissue distribution, expressed by the venom gland.

It is found in the secreted. Functionally, potent inhibitor of insect, but not mammalian, voltage-gated calcium channels (Cav). This Hadronyche infensa (Fraser island funnel-web spider) protein is Omega-hexatoxin-Hi2b.